The chain runs to 770 residues: Formate acetyltransferase (770 aa).

The PFL domain maps to 5–635 (NEMQKLAWAG…KTGNTPDGRR (631 aa)). C419 (S-acetylcysteine intermediate) is an active-site residue. C420 (cysteine radical intermediate) is an active-site residue. A Glycine radical domain is found at 642–770 (PGANPMHGRD…VITRTFTESM (129 aa)). Residue G745 is modified to Glycine radical.

This sequence belongs to the glycyl radical enzyme (GRE) family. PFL subfamily. Homodimer.

It localises to the cytoplasm. The catalysed reaction is formate + acetyl-CoA = pyruvate + CoA. It functions in the pathway fermentation; pyruvate fermentation; formate from pyruvate: step 1/1. Catalyzes the conversion of pyruvate to formate and acetyl-CoA. The polypeptide is Formate acetyltransferase (pflB) (Haemophilus influenzae (strain ATCC 51907 / DSM 11121 / KW20 / Rd)).